We begin with the raw amino-acid sequence, 248 residues long: PF03932 family protein CutC (248 aa).

Belongs to the CutC family.

The protein resides in the cytoplasm. In Porphyromonas gingivalis (strain ATCC BAA-308 / W83), this protein is PF03932 family protein CutC.